A 147-amino-acid polypeptide reads, in one-letter code: Hemoglobin subunit epsilon (147 aa).

A Globin domain is found at 3–147 (HFTAEEKAAI…VAIALGHKYH (145 aa)). Phosphoserine is present on residues S14 and S51. Positions 64 and 93 each coordinate heme b.

It belongs to the globin family. Heterotetramer of two alpha chains and two epsilon chains in early embryonic hemoglobin Gower-2; two zeta chains and two epsilon chains in early embryonic hemoglobin Gower-1. In terms of tissue distribution, red blood cells.

In terms of biological role, the epsilon chain is a beta-type chain of early mammalian embryonic hemoglobin. In Lagothrix lagotricha (Brown woolly monkey), this protein is Hemoglobin subunit epsilon (HBE1).